Here is a 143-residue protein sequence, read N- to C-terminus: Large ribosomal subunit protein uL11 (143 aa).

It belongs to the universal ribosomal protein uL11 family. Part of the ribosomal stalk of the 50S ribosomal subunit. Interacts with L10 and the large rRNA to form the base of the stalk. L10 forms an elongated spine to which L12 dimers bind in a sequential fashion forming a multimeric L10(L12)X complex. One or more lysine residues are methylated.

In terms of biological role, forms part of the ribosomal stalk which helps the ribosome interact with GTP-bound translation factors. The polypeptide is Large ribosomal subunit protein uL11 (Caulobacter vibrioides (strain ATCC 19089 / CIP 103742 / CB 15) (Caulobacter crescentus)).